Reading from the N-terminus, the 117-residue chain is Holo-[acyl-carrier-protein] synthase (117 aa).

Mg(2+)-binding residues include Asp6 and Glu55.

It belongs to the P-Pant transferase superfamily. AcpS family. Mg(2+) serves as cofactor.

The protein resides in the cytoplasm. It catalyses the reaction apo-[ACP] + CoA = holo-[ACP] + adenosine 3',5'-bisphosphate + H(+). Its function is as follows. Transfers the 4'-phosphopantetheine moiety from coenzyme A to a Ser of acyl-carrier-protein. This is Holo-[acyl-carrier-protein] synthase from Chlorobaculum parvum (strain DSM 263 / NCIMB 8327) (Chlorobium vibrioforme subsp. thiosulfatophilum).